The sequence spans 684 residues: Collagen alpha-3(IX) chain (684 aa).

Positions methionine 1–alanine 25 are cleaved as a signal peptide. Disordered regions lie at residues glutamine 26–serine 521 and leucine 548–serine 665. Residues glycine 29 to glutamate 519 are triple-helical region 3 (COL3). Pro residues-rich tracts occupy residues proline 31–lysine 42 and proline 55–lysine 64. The span at alanine 66–proline 82 shows a compositional bias: low complexity. The span at glycine 130–glycine 139 shows a compositional bias: gly residues. 2 stretches are compositionally biased toward pro residues: residues proline 140–histidine 161 and isoleucine 177–methionine 188. Basic and acidic residues predominate over residues glutamate 200 to aspartate 212. Low complexity predominate over residues leucine 221–proline 237. 2 stretches are compositionally biased toward basic and acidic residues: residues alanine 264–leucine 282 and serine 344–glutamate 356. The Cell attachment site signature appears at arginine 423–aspartate 425. N-linked (GlcNAc...) asparagine glycosylation is present at asparagine 483. A compositionally biased stretch (low complexity) spans leucine 498–proline 507. Residues alanine 520–proline 550 form a nonhelical region 3 (NC3) region. Residues glycine 551–serine 630 are triple-helical region 2 (COL2). Over residues proline 558–proline 568 the composition is skewed to pro residues. Low complexity predominate over residues serine 570–threonine 586. Residues arginine 601–aspartate 603 carry the Cell attachment site motif. Positions aspartate 617–glycine 628 are enriched in low complexity. A nonhelical region 2 (NC2) region spans residues lysine 631–aspartate 632. The tract at residues glycine 633–isoleucine 661 is triple-helical region 1 (COL1). The nonhelical region 1 (NC1) stretch occupies residues cysteine 662–serine 684.

It belongs to the fibril-associated collagens with interrupted helices (FACIT) family. Heterotrimer of an alpha 1(IX), an alpha 2(IX) and an alpha 3(IX) chain. Covalently linked to the telopeptides of type II collagen by lysine-derived cross-links. Post-translationally, prolines at the third position of the tripeptide repeating unit (G-X-Y) are hydroxylated in some or all of the chains.

The protein localises to the secreted. It is found in the extracellular space. Its subcellular location is the extracellular matrix. Its function is as follows. Structural component of hyaline cartilage and vitreous of the eye. The polypeptide is Collagen alpha-3(IX) chain (COL9A3) (Homo sapiens (Human)).